The sequence spans 254 residues: Triosephosphate isomerase (254 aa).

Substrate is bound at residue 10-12 (NWK). H99 serves as the catalytic Electrophile. The active-site Proton acceptor is the E169. Substrate contacts are provided by residues G175, S215, and 236–237 (GG).

This sequence belongs to the triosephosphate isomerase family. Homodimer.

The protein resides in the cytoplasm. It catalyses the reaction D-glyceraldehyde 3-phosphate = dihydroxyacetone phosphate. It participates in carbohydrate biosynthesis; gluconeogenesis. It functions in the pathway carbohydrate degradation; glycolysis; D-glyceraldehyde 3-phosphate from glycerone phosphate: step 1/1. Functionally, involved in the gluconeogenesis. Catalyzes stereospecifically the conversion of dihydroxyacetone phosphate (DHAP) to D-glyceraldehyde-3-phosphate (G3P). This chain is Triosephosphate isomerase, found in Chlamydia abortus (strain DSM 27085 / S26/3) (Chlamydophila abortus).